We begin with the raw amino-acid sequence, 274 residues long: NH(3)-dependent NAD(+) synthetase (274 aa).

Position 46 to 53 (46 to 53 (GISGGQDS)) interacts with ATP. D52 lines the Mg(2+) pocket. Deamido-NAD(+) is bound at residue R140. ATP is bound at residue T160. E165 contacts Mg(2+). 2 residues coordinate deamido-NAD(+): K173 and D180. Positions 189 and 211 each coordinate ATP. Position 260 to 261 (260 to 261 (HK)) interacts with deamido-NAD(+).

It belongs to the NAD synthetase family. As to quaternary structure, homodimer.

The enzyme catalyses deamido-NAD(+) + NH4(+) + ATP = AMP + diphosphate + NAD(+) + H(+). It participates in cofactor biosynthesis; NAD(+) biosynthesis; NAD(+) from deamido-NAD(+) (ammonia route): step 1/1. Its function is as follows. Catalyzes the ATP-dependent amidation of deamido-NAD to form NAD. Uses ammonia as a nitrogen source. This Lactococcus lactis subsp. cremoris (strain MG1363) protein is NH(3)-dependent NAD(+) synthetase.